The sequence spans 562 residues: Probable sesquiterpene synthase (562 aa).

Positions 315, 319, and 467 each coordinate Mg(2+). The DDXXD motif signature appears at 315–319; it reads DDIYD.

Belongs to the terpene synthase family. Tpsa subfamily. Mg(2+) is required as a cofactor. The cofactor is Mn(2+).

Sesquiterpene synthase. The sequence is that of Probable sesquiterpene synthase (STPS) from Santalum murrayanum (Bitter quandong).